The sequence spans 132 residues: MTLNLCVLTPNRIIWDSEVKEIILSTNSGQIGVLPNHAPIATAVDIGILRIRLNGQWLMMAVMGGFARIGNNEITILVNDAEKGSDIDPQEAQRTLEIAEANLSKAEGKRQVIEANLALRRARTRVEAINVI.

Belongs to the ATPase epsilon chain family. F-type ATPases have 2 components, CF(1) - the catalytic core - and CF(0) - the membrane proton channel. CF(1) has five subunits: alpha(3), beta(3), gamma(1), delta(1), epsilon(1). CF(0) has three main subunits: a, b and c.

Its subcellular location is the plastid. It localises to the chloroplast thylakoid membrane. Its function is as follows. Produces ATP from ADP in the presence of a proton gradient across the membrane. This Calycanthus floridus var. glaucus (Eastern sweetshrub) protein is ATP synthase epsilon chain, chloroplastic.